Reading from the N-terminus, the 517-residue chain is Peptide chain release factor 3 (517 aa).

Residues 9-269 enclose the tr-type G domain; the sequence is AKRRTFAIIS…DFVEHAPAPR (261 aa). Residues 18–25, 86–90, and 140–143 contribute to the GTP site; these read SHPDAGKT, DTPGH, and NKLD.

Belongs to the TRAFAC class translation factor GTPase superfamily. Classic translation factor GTPase family. PrfC subfamily.

It localises to the cytoplasm. Its function is as follows. Increases the formation of ribosomal termination complexes and stimulates activities of RF-1 and RF-2. It binds guanine nucleotides and has strong preference for UGA stop codons. It may interact directly with the ribosome. The stimulation of RF-1 and RF-2 is significantly reduced by GTP and GDP, but not by GMP. The sequence is that of Peptide chain release factor 3 from Halorhodospira halophila (strain DSM 244 / SL1) (Ectothiorhodospira halophila (strain DSM 244 / SL1)).